The following is a 134-amino-acid chain: ATP synthase epsilon chain (134 aa).

The protein belongs to the ATPase epsilon chain family. F-type ATPases have 2 components, CF(1) - the catalytic core - and CF(0) - the membrane proton channel. CF(1) has five subunits: alpha(3), beta(3), gamma(1), delta(1), epsilon(1). CF(0) has three main subunits: a, b and c.

It is found in the cellular thylakoid membrane. Functionally, produces ATP from ADP in the presence of a proton gradient across the membrane. This Prochlorococcus marinus (strain MIT 9301) protein is ATP synthase epsilon chain.